The following is a 69-amino-acid chain: uncharacterized protein (69 aa).

This is an uncharacterized protein from Bacillus subtilis (strain 168).